Consider the following 243-residue polypeptide: ATP-dependent dethiobiotin synthetase BioD (243 aa).

12 to 17 contributes to the ATP binding site; the sequence is DVGKTL. A Mg(2+)-binding site is contributed by Thr16. Lys37 is a catalytic residue. Residue Ser41 coordinates substrate. Residues Asp54, 115–118, and 179–180 contribute to the ATP site; these read EGCG and NM. Mg(2+) is bound by residues Asp54 and Glu115.

It belongs to the dethiobiotin synthetase family. In terms of assembly, homodimer. Mg(2+) is required as a cofactor.

The protein resides in the cytoplasm. The enzyme catalyses (7R,8S)-7,8-diammoniononanoate + CO2 + ATP = (4R,5S)-dethiobiotin + ADP + phosphate + 3 H(+). It functions in the pathway cofactor biosynthesis; biotin biosynthesis; biotin from 7,8-diaminononanoate: step 1/2. Its function is as follows. Catalyzes a mechanistically unusual reaction, the ATP-dependent insertion of CO2 between the N7 and N8 nitrogen atoms of 7,8-diaminopelargonic acid (DAPA, also called 7,8-diammoniononanoate) to form a ureido ring. This chain is ATP-dependent dethiobiotin synthetase BioD, found in Caldicellulosiruptor saccharolyticus (strain ATCC 43494 / DSM 8903 / Tp8T 6331).